The sequence spans 811 residues: Glycerol-3-phosphate acyltransferase (811 aa).

Positions 309 to 314 (CHRSHM) match the HXXXXD motif motif.

The protein belongs to the GPAT/DAPAT family.

The protein localises to the cell inner membrane. It catalyses the reaction sn-glycerol 3-phosphate + an acyl-CoA = a 1-acyl-sn-glycero-3-phosphate + CoA. It functions in the pathway phospholipid metabolism; CDP-diacylglycerol biosynthesis; CDP-diacylglycerol from sn-glycerol 3-phosphate: step 1/3. The sequence is that of Glycerol-3-phosphate acyltransferase from Colwellia psychrerythraea (strain 34H / ATCC BAA-681) (Vibrio psychroerythus).